A 30-amino-acid chain; its full sequence is Bacteriocin curvaticin (30 aa).

A disulfide bond links C9 and C14.

It localises to the secreted. Has antibacterial activity against the Gram-positive bacterium L.monocytogenes. The protein is Bacteriocin curvaticin of Latilactobacillus curvatus (Lactobacillus curvatus).